The primary structure comprises 225 residues: NAD(P)H-quinone oxidoreductase subunit K, chloroplastic (225 aa).

[4Fe-4S] cluster-binding residues include Cys-43, Cys-44, Cys-108, and Cys-139.

Belongs to the complex I 20 kDa subunit family. In terms of assembly, NDH is composed of at least 16 different subunits, 5 of which are encoded in the nucleus. [4Fe-4S] cluster serves as cofactor.

It is found in the plastid. Its subcellular location is the chloroplast thylakoid membrane. The catalysed reaction is a plastoquinone + NADH + (n+1) H(+)(in) = a plastoquinol + NAD(+) + n H(+)(out). It catalyses the reaction a plastoquinone + NADPH + (n+1) H(+)(in) = a plastoquinol + NADP(+) + n H(+)(out). In terms of biological role, NDH shuttles electrons from NAD(P)H:plastoquinone, via FMN and iron-sulfur (Fe-S) centers, to quinones in the photosynthetic chain and possibly in a chloroplast respiratory chain. The immediate electron acceptor for the enzyme in this species is believed to be plastoquinone. Couples the redox reaction to proton translocation, and thus conserves the redox energy in a proton gradient. The polypeptide is NAD(P)H-quinone oxidoreductase subunit K, chloroplastic (Carica papaya (Papaya)).